Here is a 254-residue protein sequence, read N- to C-terminus: Alcohol dehydrogenase 1 (254 aa).

Position 10–33 (10–33) interacts with NAD(+); sequence FVAGLGGIGLDTSREIVKSGPKNL. Position 138 (S138) interacts with substrate. Y151 acts as the Proton acceptor in catalysis.

This sequence belongs to the short-chain dehydrogenases/reductases (SDR) family. In terms of assembly, homodimer.

It carries out the reaction a primary alcohol + NAD(+) = an aldehyde + NADH + H(+). The catalysed reaction is a secondary alcohol + NAD(+) = a ketone + NADH + H(+). The sequence is that of Alcohol dehydrogenase 1 (Adh1) from Drosophila hydei (Fruit fly).